Here is a 66-residue protein sequence, read N- to C-terminus: MPQLDTSTWLMMIMSMFLALFIIFQLKISKHNFHFNPELTLTKTQKQKTPWETKWTKIYLPLLLPQ.

A helical membrane pass occupies residues 8 to 24 (TWLMMIMSMFLALFIIF). Lys-54 is subject to N6-acetyllysine; alternate. Position 54 is an N6-succinyllysine; alternate (Lys-54). Lys-57 carries the post-translational modification N6-acetyllysine.

The protein belongs to the ATPase protein 8 family. F-type ATPases have 2 components, CF(1) - the catalytic core - and CF(0) - the membrane proton channel. Component of an ATP synthase complex composed of ATP5PB, ATP5MC1, ATP5F1E, ATP5PD, ATP5ME, ATP5PF, ATP5MF, MT-ATP6, MT-ATP8, ATP5F1A, ATP5F1B, ATP5F1D, ATP5F1C, ATP5PO, ATP5MG, ATP5MK and ATP5MJ. Interacts with PRICKLE3.

The protein localises to the mitochondrion membrane. Functionally, mitochondrial membrane ATP synthase (F(1)F(0) ATP synthase or Complex V) produces ATP from ADP in the presence of a proton gradient across the membrane which is generated by electron transport complexes of the respiratory chain. F-type ATPases consist of two structural domains, F(1) - containing the extramembraneous catalytic core and F(0) - containing the membrane proton channel, linked together by a central stalk and a peripheral stalk. During catalysis, ATP synthesis in the catalytic domain of F(1) is coupled via a rotary mechanism of the central stalk subunits to proton translocation. Part of the complex F(0) domain. Minor subunit located with subunit a in the membrane. In Cervus elaphus hippelaphus (European red deer), this protein is ATP synthase protein 8 (MT-ATP8).